The primary structure comprises 148 residues: Large ribosomal subunit protein uL15 (148 aa).

The tract at residues 1-57 is disordered; that stretch reads MRLNDVKPQKGSKKRRRRVGRGISAGQGASAGLGMRGQKSRSGSGTRPGFEGGQQPL. Positions 10-20 are enriched in basic residues; that stretch reads KGSKKRRRRVG. Over residues 23–35 the composition is skewed to gly residues; sequence ISAGQGASAGLGM.

It belongs to the universal ribosomal protein uL15 family. As to quaternary structure, part of the 50S ribosomal subunit.

In terms of biological role, binds to the 23S rRNA. This is Large ribosomal subunit protein uL15 from Trichormus variabilis (strain ATCC 29413 / PCC 7937) (Anabaena variabilis).